The sequence spans 366 residues: Chorismate synthase (366 aa).

Positions 48 and 54 each coordinate NADP(+). FMN-binding positions include 125 to 127 (RSS), 238 to 239 (NA), Gly-278, 293 to 297 (KPTSS), and Arg-319.

Belongs to the chorismate synthase family. In terms of assembly, homotetramer. The cofactor is FMNH2.

The catalysed reaction is 5-O-(1-carboxyvinyl)-3-phosphoshikimate = chorismate + phosphate. The protein operates within metabolic intermediate biosynthesis; chorismate biosynthesis; chorismate from D-erythrose 4-phosphate and phosphoenolpyruvate: step 7/7. In terms of biological role, catalyzes the anti-1,4-elimination of the C-3 phosphate and the C-6 proR hydrogen from 5-enolpyruvylshikimate-3-phosphate (EPSP) to yield chorismate, which is the branch point compound that serves as the starting substrate for the three terminal pathways of aromatic amino acid biosynthesis. This reaction introduces a second double bond into the aromatic ring system. The chain is Chorismate synthase from Neisseria meningitidis serogroup B (strain ATCC BAA-335 / MC58).